A 425-amino-acid polypeptide reads, in one-letter code: Glutamate-1-semialdehyde 2,1-aminomutase (425 aa).

Lys265 carries the post-translational modification N6-(pyridoxal phosphate)lysine.

This sequence belongs to the class-III pyridoxal-phosphate-dependent aminotransferase family. HemL subfamily. Homodimer. Requires pyridoxal 5'-phosphate as cofactor.

It localises to the cytoplasm. It catalyses the reaction (S)-4-amino-5-oxopentanoate = 5-aminolevulinate. The protein operates within porphyrin-containing compound metabolism; protoporphyrin-IX biosynthesis; 5-aminolevulinate from L-glutamyl-tRNA(Glu): step 2/2. In Opitutus terrae (strain DSM 11246 / JCM 15787 / PB90-1), this protein is Glutamate-1-semialdehyde 2,1-aminomutase.